Here is a 301-residue protein sequence, read N- to C-terminus: PWI domain-containing protein C825.05c (301 aa).

The PWI domain maps to 26 to 137 (STKFPASYDT…YGIPEKFILE (112 aa)). A Phosphoserine modification is found at serine 86. Composition is skewed to basic and acidic residues over residues 145–182 (LKDR…ERNG), 189–205 (TLDR…ERNR), and 215–229 (RFSE…DIRS). The segment at 145–301 (LKDRTEASKE…ESDSGTQKHD (157 aa)) is disordered. At serine 199 the chain carries Phosphoserine. Positions 244–253 (PTRRRERHYR) are enriched in basic residues. Positions 254 to 289 (TRDDEGFDEFGRSRDGRWRESRTSYREKHRYDRDAL) are enriched in basic and acidic residues. Positions 290-301 (SSESDSGTQKHD) are enriched in polar residues. Serine 291 carries the post-translational modification Phosphoserine.

The protein localises to the nucleus. In Schizosaccharomyces pombe (strain 972 / ATCC 24843) (Fission yeast), this protein is PWI domain-containing protein C825.05c.